The primary structure comprises 247 residues: Ribosomal RNA small subunit methyltransferase G (247 aa).

Residues G84, F89, 136–137, and R155 each bind S-adenosyl-L-methionine; that span reads AE.

The protein belongs to the methyltransferase superfamily. RNA methyltransferase RsmG family.

It localises to the cytoplasm. Its function is as follows. Specifically methylates the N7 position of a guanine in 16S rRNA. In Prochlorococcus marinus (strain MIT 9313), this protein is Ribosomal RNA small subunit methyltransferase G.